Consider the following 145-residue polypeptide: Ribosomal RNA large subunit methyltransferase H (145 aa).

S-adenosyl-L-methionine contacts are provided by residues Leu64, Gly93, and 112–117; that span reads LSPLTF.

It belongs to the RNA methyltransferase RlmH family. In terms of assembly, homodimer.

It is found in the cytoplasm. The enzyme catalyses pseudouridine(1915) in 23S rRNA + S-adenosyl-L-methionine = N(3)-methylpseudouridine(1915) in 23S rRNA + S-adenosyl-L-homocysteine + H(+). In terms of biological role, specifically methylates the pseudouridine at position 1915 (m3Psi1915) in 23S rRNA. This is Ribosomal RNA large subunit methyltransferase H from Prochlorococcus marinus (strain MIT 9211).